The following is a 2766-amino-acid chain: Thyroglobulin (2766 aa).

The first 20 residues, 1-20 (MTALVLWVSTLLSSVCLVAA), serve as a signal peptide directing secretion. Position 25 is an iodotyrosine; alternate (Y25). At Y25 the chain carries Sulfotyrosine; alternate. Y25 bears the Thyroxine; alternate mark. Residue Y25 is modified to Triiodothyronine; alternate. 4 Thyroglobulin type-1 domains span residues 32 to 93 (LRPC…PTVC), 94 to 161 (LSFC…PTRC), 162 to 298 (PRSC…RFRC), and 299 to 359 (PTKC…PPSC). Disulfide bonds link C35–C53, C64–C71, C73–C93, C97–C121, C132–C139, C141–C161, C165–C184, and C195–C236. Y109 bears the Iodotyrosine mark. A glycan (N-linked (GlcNAc...) asparagine) is linked at N111. Position 150 is an iodotyrosine; alternate (Y150). Residue Y150 is modified to Diiodotyrosine; alternate. Residue N199 is glycosylated (N-linked (GlcNAc...) asparagine). Y235 and Y259 each carry iodotyrosine. 9 cysteine pairs are disulfide-bonded: C302–C320, C331–C337, C339–C359, C365–C620, C408–C608, C631–C636, C638–C658, C662–C687, and C698–C703. 2 N-linked (GlcNAc...) asparagine glycosylation sites follow: N484 and N496. Thyroglobulin type-1 domains lie at 605–658 (AQAC…RPRC), 659–726 (PTKC…AKQC), 727–922 (PSVC…IPAC), 923–1074 (PGPC…MPQC), 1075–1146 (PTNC…SAQC), and 1147–1211 (PGLC…QPAC). At Y704 the chain carries Iodotyrosine; alternate. Y704 is subject to Thyroxine; alternate. At Y704 the chain carries Triiodothyronine; alternate. Y704 carries the diiodotyrosine; alternate modification. Intrachain disulfides connect C705/C726, C730/C763, C774/C899, C901/C922, C926/C1032, C1043/C1050, C1052/C1074, C1078/C1109, C1127/C1146, C1150/C1170, C1182/C1189, C1191/C1211, C1216/C1265, C1232/C1246, C1306/C1356, and C1331/C1347. N-linked (GlcNAc...) asparagine glycosylation is present at N748. Y785 is subject to Iodotyrosine. N817 carries N-linked (GlcNAc...) asparagine glycosylation. Y867 carries the post-translational modification Iodotyrosine; alternate. Y867 is modified (diiodotyrosine; alternate). Y884 carries the post-translational modification Diiodotyrosine. A glycan (N-linked (GlcNAc...) asparagine) is linked at N948. Position 993 is an iodotyrosine; alternate (Y993). Y993 bears the Diiodotyrosine; alternate mark. Residue N1141 is glycosylated (N-linked (GlcNAc...) asparagine). Y1310 is modified (iodotyrosine). At Y1310 the chain carries Thyroxine. N-linked (GlcNAc...) asparagine glycans are attached at residues N1349 and N1365. 9 cysteine pairs are disulfide-bonded: C1441-C1458, C1461-C1472, C1475-C1489, C1492-C1509, C1513-C1522, C1542-C1564, C1602-C1626, C1606-C1612, and C1638-C1661. 3 Type II repeats span residues 1455–1468 (ALGC…SFSQ), 1469–1485 (DGRC…EQAG), and 1486–1502 (SSAC…ITTG). The region spanning 1510-1564 (VTDCQKNEAGLQCDQNGQYQASQKNRDSGEVFCVDSEGRKLQWLQTEAGLSESQC) is the Thyroglobulin type-1 11 domain. A Type IIIA repeat occupies 1602-1722 (CLTDCANDEA…GANLTDTHTY (121 aa)). 4 N-linked (GlcNAc...) asparagine glycosylation sites follow: N1715, N1729, N1773, and N1864. 4 disulfide bridges follow: C1723–C1748, C1727–C1733, C1732–C1834, and C1759–C1776. One copy of the Type IIIB repeat lies at 1723 to 1889 (CLLACDNDSC…LFSAEQANLW (167 aa)). 7 disulfides stabilise this stretch: C1890–C1916, C1894–C1901, C1925–C1936, C1993–C2021, C1997–C2003, C2002–C2073, and C2032–C2045. The Type IIIA repeat unit spans residues 1890–1992 (CLSRCAQEPI…GKLISNGFFE (103 aa)). The N-linked (GlcNAc...) asparagine glycan is linked to N1935. The Type IIIB repeat unit spans residues 1993–2125 (CERLCDRDPC…AATSNFSMAQ (133 aa)). N2010 is a glycosylation site (N-linked (GlcNAc...) asparagine). Residue N2120 is glycosylated (N-linked (GlcNAc...) asparagine). The Type IIIA repeat unit spans residues 2126–2183 (DFCLQQCSRHQDCLVTTLQIQPGVVRCVFYPDIQNCIHSLRSHTCWLLLHEEATYIYR). Cystine bridges form between C2128–C2152, C2132–C2138, and C2161–C2170. Y2182 is subject to Iodotyrosine. The tract at residues 2186 to 2766 (GIPLVQSDVT…LEPVPKSYSK (581 aa)) is cholinesterase-like (ChEL). Residue N2249 is glycosylated (N-linked (GlcNAc...) asparagine). Residues C2263 and C2280 are joined by a disulfide bond. N2294 is a glycosylation site (N-linked (GlcNAc...) asparagine). C2441 and C2452 form a disulfide bridge. Y2539 carries the thyroxine modification. The residue at position 2572 (Y2572) is an Iodotyrosine; alternate. At Y2572 the chain carries Thyroxine; alternate. The residue at position 2572 (Y2572) is a Triiodothyronine; alternate. Y2572 bears the Diiodotyrosine; alternate mark. A glycan (N-linked (GlcNAc...) asparagine) is linked at N2581. An iodotyrosine mark is found at Y2586 and Y2616. Residues C2590 and C2714 are joined by a disulfide bond. Y2696 is modified (diiodotyrosine). The disordered stretch occupies residues 2729–2766 (GAKDAQLTKSEEEDLEVGPGLEEDLSGSLEPVPKSYSK). Residues 2739 to 2753 (EEEDLEVGPGLEEDL) show a composition bias toward acidic residues. Iodotyrosine; alternate is present on Y2764. Position 2764 is a thyroxine; alternate (Y2764). At Y2764 the chain carries Triiodothyronine; alternate. A Diiodotyrosine; alternate modification is found at Y2764.

It belongs to the type-B carboxylesterase/lipase family. As to quaternary structure, monomer. Homodimer (via ChEL region); occurs in the endoplasmic reticulum and is required for export to the Golgi apparatus. Homooligomer; disulfide-linked; stored in this form in the thyroid follicle lumen. Iodinated on tyrosine residues by TPO. There are 4 pairs of iodinated tyrosines used for coupling: acceptor Tyr-25 is coupled to donor Tyr-150 or Tyr-235, acceptor Tyr-2572 is coupled to donor Tyr-2539, acceptor Tyr-2764 in monomer 1 is coupled to donor Tyr-2764 in monomer 2 and acceptor Tyr-1310 in monomer 1 is coupled to donor Tyr-109 in monomer 2. In terms of processing, sulfated tyrosines are desulfated during iodination. Post-translationally, undergoes sequential proteolysis by cathepsins to release thyroxine (T4) and triiodothyronine (T3) hormones. In the thyroid follicle lumen, cross-linked TG (storage form) is solubilized by limited proteolysis mediated by cathepsins CTSB and/or CTSL. Partially cleaved TG is further processed by CTSK/cathepsin K and/or CTSL resulting in the release of T4. Following endocytosis, further processing occurs leading to the release of T3 and more T4 hormones. In terms of tissue distribution, specifically expressed in the thyroid gland.

It is found in the secreted. Acts as a substrate for the production of iodinated thyroid hormones thyroxine (T4) and triiodothyronine (T3). The synthesis of T3 and T4 involves iodination of selected tyrosine residues of TG/thyroglobulin followed by their oxidative coupling. Following TG re-internalization and lysosomal-mediated proteolysis, T3 and T4 are released from the polypeptide backbone leading to their secretion into the bloodstream. One dimer produces 7 thyroid hormone molecules. The polypeptide is Thyroglobulin (Tg) (Mus musculus (Mouse)).